The primary structure comprises 155 residues: Large ribosomal subunit protein bL9c (155 aa).

The protein belongs to the bacterial ribosomal protein bL9 family.

It is found in the plastid. Its subcellular location is the chloroplast. In terms of biological role, binds to the 23S rRNA. The polypeptide is Large ribosomal subunit protein bL9c (Pyropia yezoensis (Susabi-nori)).